Here is a 218-residue protein sequence, read N- to C-terminus: 23 kDa integral membrane protein (218 aa).

The Cytoplasmic segment spans residues 1–12 (MATLGTGMRCLK). The chain crosses the membrane as a helical span at residues 13 to 36 (SCVFVLNIICLLCSLVLIGAGAYV). At 37-55 (EVKFSQYGDNLHKVWQAAP) the chain is on the extracellular side. The chain crosses the membrane as a helical span at residues 56–71 (IAIIVVGVIILIVSFL). Residues 72 to 82 (GCCGAIKENVC) are Cytoplasmic-facing. The helical transmembrane segment at 83–108 (MLYMYAFFLVVLLIAELAAAIVAVVY) threads the bilayer. The Extracellular portion of the chain corresponds to 109-183 (KDRIDSEIDA…SVFGAFLKRN (75 aa)). The N-linked (GlcNAc...) asparagine glycan is linked to asparagine 165. Residues 184-205 (LVIVACVAFGVCFFQLLSIVIA) form a helical membrane-spanning segment. The Cytoplasmic portion of the chain corresponds to 206-218 (CCLGRQIKEYENV).

The protein belongs to the tetraspanin (TM4SF) family.

The protein localises to the membrane. This chain is 23 kDa integral membrane protein, found in Schistosoma mansoni (Blood fluke).